The chain runs to 511 residues: Bifunctional purine biosynthesis protein PurH (511 aa).

The MGS-like domain maps to 1-147 (MIQIKRALIS…KNYKHTLVLT (147 aa)).

The protein belongs to the PurH family.

The enzyme catalyses (6R)-10-formyltetrahydrofolate + 5-amino-1-(5-phospho-beta-D-ribosyl)imidazole-4-carboxamide = 5-formamido-1-(5-phospho-D-ribosyl)imidazole-4-carboxamide + (6S)-5,6,7,8-tetrahydrofolate. The catalysed reaction is IMP + H2O = 5-formamido-1-(5-phospho-D-ribosyl)imidazole-4-carboxamide. It participates in purine metabolism; IMP biosynthesis via de novo pathway; 5-formamido-1-(5-phospho-D-ribosyl)imidazole-4-carboxamide from 5-amino-1-(5-phospho-D-ribosyl)imidazole-4-carboxamide (10-formyl THF route): step 1/1. Its pathway is purine metabolism; IMP biosynthesis via de novo pathway; IMP from 5-formamido-1-(5-phospho-D-ribosyl)imidazole-4-carboxamide: step 1/1. This is Bifunctional purine biosynthesis protein PurH from Leptospira interrogans serogroup Icterohaemorrhagiae serovar Lai (strain 56601).